We begin with the raw amino-acid sequence, 748 residues long: Polyribonucleotide nucleotidyltransferase (748 aa).

Residues D484 and D490 each coordinate Mg(2+). The region spanning 551 to 610 (PRIETMSVPKDKIRDVIGTGGKVIREIVATTGAKVDIEDDGTVRLSSSDPANIEAAREWI) is the KH domain. The S1 motif domain maps to 620-688 (GKIYNGKVVN…NRGKVRLSMR (69 aa)). Positions 693-748 (ETGAELDDNRPPRENAERRGGERPRRDRGPRRESGDRPARRDMEPEFAPAFLRKDS) are disordered. The segment covering 699-736 (DDNRPPRENAERRGGERPRRDRGPRRESGDRPARRDME) has biased composition (basic and acidic residues).

Belongs to the polyribonucleotide nucleotidyltransferase family. Requires Mg(2+) as cofactor.

The protein localises to the cytoplasm. The enzyme catalyses RNA(n+1) + phosphate = RNA(n) + a ribonucleoside 5'-diphosphate. Its function is as follows. Involved in mRNA degradation. Catalyzes the phosphorolysis of single-stranded polyribonucleotides processively in the 3'- to 5'-direction. The polypeptide is Polyribonucleotide nucleotidyltransferase (Zymomonas mobilis subsp. mobilis (strain ATCC 31821 / ZM4 / CP4)).